Here is a 648-residue protein sequence, read N- to C-terminus: Transcription termination factor FttA (648 aa).

Residues 9–76 (DDILKEIREI…ISVRPDPDIL (68 aa)) form a KHa region. The segment at 77–144 (LPPEKAEELI…WAPRVVRTPP (68 aa)) is KHb. Positions 185 to 395 (WIRITGLGGF…LVMESTYGGS (211 aa)) are metallo-beta-lactamase N-terminus. Zn(2+)-binding residues include H253, H255, D257, H258, H341, and D364. A beta-Casp region spans residues 396–589 (NDYQMPREEA…MEVHTIDGFS (194 aa)). The tract at residues 590–648 (GHADRRELMSYVARVRPRPERIITVHGEAHKCLDLSSSIHKKFGISTRAPNNLDAIRLK) is metallo-beta-lactamase C-terminus. Zn(2+) is bound at residue H615.

Belongs to the metallo-beta-lactamase superfamily. RNA-metabolizing metallo-beta-lactamase-like family. FttA subfamily. Homodimer. Probably interacts transiently with RNA polymerase (RNAP), (via at least the RNAP stalk subunits Rpo4 and Rpo7), interacts transiently with the Spt4-Spt5 complex. Zn(2+) serves as cofactor.

Transcription termination is stimulated by the Spt4-Spt5 complex. Dipicolinic acid inhibits FttA-mediated termination in vitro and inhibits growth in vivo. Functionally, terminates transcription on the whole genome. Termination is linked to FttA-mediated RNA cleavage and does not require NTP hydrolysis. Cleaves endonucleolytically at the RNA exit channel of RNA polymerase (RNAP); the 5'-3' exonuclease activity of this protein degrades the nascent RNA released from RNAP. Its function is as follows. Facilitates transcription termination; addition of this factor to stalled transcription elongation complexes (TEC) promotes nascent transcript cleavage and releases RNA polymerase (RNAP) from DNA in vitro. Transcription termination competes with productive transcription elongation. Termination is stimulated by C-rich transcripts and inhibited by G-rich transcripts; the Spt4-Spt5 complex enhances termination on C-less transcripts. Yields an approximately 100 nucleotide RNA, consistent with endonucleolytic cleavage at the RNA exit channel of RNAP. This Thermococcus kodakarensis (strain ATCC BAA-918 / JCM 12380 / KOD1) (Pyrococcus kodakaraensis (strain KOD1)) protein is Transcription termination factor FttA.